The primary structure comprises 104 residues: Pterin-4-alpha-carbinolamine dehydratase (104 aa).

Alanine 2 carries the post-translational modification N-acetylalanine. Substrate is bound by residues 61 to 63 (DHH) and 78 to 81 (STHE).

This sequence belongs to the pterin-4-alpha-carbinolamine dehydratase family. As to quaternary structure, homotetramer and homodimer. Heterotetramer with HNF1A; formed by a dimer of dimers. Interacts with HNF1B (via HNF-p1 domain); the interaction increases HNF1B transactivation activity. In terms of tissue distribution, mainly expressed in the liver, in pancreatic cells, and in the kidney, especially in the distal convoluted tubule, in the cortical thick ascending limb of Henle's loop and in the connecting tubule.

It localises to the cytoplasm. The protein resides in the nucleus. It carries out the reaction (4aS,6R)-4a-hydroxy-L-erythro-5,6,7,8-tetrahydrobiopterin = (6R)-L-erythro-6,7-dihydrobiopterin + H2O. In terms of biological role, involved in tetrahydrobiopterin biosynthesis. Seems to both prevent the formation of 7-pterins and accelerate the formation of quinonoid-BH2. Coactivator for HNF1A-dependent transcription. Regulates the dimerization of homeodomain protein HNF1A and enhances its transcriptional activity. Also acts as a coactivator for HNF1B-dependent transcription. This is Pterin-4-alpha-carbinolamine dehydratase (Pcbd1) from Mus musculus (Mouse).